Consider the following 285-residue polypeptide: CCR4-NOT transcription complex subunit 7 (285 aa).

Residues D40, E42, D161, D230, and E278 each coordinate a divalent metal cation.

Belongs to the CAF1 family. In terms of assembly, component of the CCR4-NOT complex. Mn(2+) is required as a cofactor. Mg(2+) serves as cofactor. The cofactor is Co(2+).

It localises to the nucleus. Its subcellular location is the cytoplasm. The enzyme catalyses Exonucleolytic cleavage of poly(A) to 5'-AMP.. Its function is as follows. Has 3'-5' poly(A) exoribonuclease activity for synthetic poly(A) RNA substrate. Catalytic component of the CCR4-NOT complex which is one of the major cellular mRNA deadenylases and is linked to various cellular processes including bulk mRNA degradation, miRNA-mediated repression, translational repression during translational initiation and general transcription regulation. During miRNA-mediated repression the complex also seems to act as translational repressor during translational initiation. Additional complex functions may be a consequence of its influence on mRNA expression. This is CCR4-NOT transcription complex subunit 7 (cnot7) from Xenopus tropicalis (Western clawed frog).